The chain runs to 366 residues: Histidinol-phosphate aminotransferase 2 (366 aa).

Lys226 is subject to N6-(pyridoxal phosphate)lysine.

The protein belongs to the class-II pyridoxal-phosphate-dependent aminotransferase family. Histidinol-phosphate aminotransferase subfamily. As to quaternary structure, homodimer. It depends on pyridoxal 5'-phosphate as a cofactor.

The enzyme catalyses L-histidinol phosphate + 2-oxoglutarate = 3-(imidazol-4-yl)-2-oxopropyl phosphate + L-glutamate. It participates in amino-acid biosynthesis; L-histidine biosynthesis; L-histidine from 5-phospho-alpha-D-ribose 1-diphosphate: step 7/9. This Cupriavidus pinatubonensis (strain JMP 134 / LMG 1197) (Cupriavidus necator (strain JMP 134)) protein is Histidinol-phosphate aminotransferase 2.